The following is a 382-amino-acid chain: UDP-N-acetylglucosamine--N-acetylmuramyl-(pentapeptide) pyrophosphoryl-undecaprenol N-acetylglucosamine transferase (382 aa).

UDP-N-acetyl-alpha-D-glucosamine-binding positions include 17–19, N137, R179, S213, and Q308; that span reads TAG.

Belongs to the glycosyltransferase 28 family. MurG subfamily.

The protein resides in the cell membrane. It carries out the reaction di-trans,octa-cis-undecaprenyl diphospho-N-acetyl-alpha-D-muramoyl-L-alanyl-D-glutamyl-meso-2,6-diaminopimeloyl-D-alanyl-D-alanine + UDP-N-acetyl-alpha-D-glucosamine = di-trans,octa-cis-undecaprenyl diphospho-[N-acetyl-alpha-D-glucosaminyl-(1-&gt;4)]-N-acetyl-alpha-D-muramoyl-L-alanyl-D-glutamyl-meso-2,6-diaminopimeloyl-D-alanyl-D-alanine + UDP + H(+). It functions in the pathway cell wall biogenesis; peptidoglycan biosynthesis. Cell wall formation. Catalyzes the transfer of a GlcNAc subunit on undecaprenyl-pyrophosphoryl-MurNAc-pentapeptide (lipid intermediate I) to form undecaprenyl-pyrophosphoryl-MurNAc-(pentapeptide)GlcNAc (lipid intermediate II). This is UDP-N-acetylglucosamine--N-acetylmuramyl-(pentapeptide) pyrophosphoryl-undecaprenol N-acetylglucosamine transferase from Rhodococcus jostii (strain RHA1).